The following is a 426-amino-acid chain: Serine protease HTRA2, mitochondrial (426 aa).

Over residues 31-58 (SSTCNSTNTDNGSHNTNYNSSNNNNNNN) the composition is skewed to low complexity. Residues 31–59 (SSTCNSTNTDNGSHNTNYNSSNNNNNNND) are disordered. Residues 71–87 (FLVPFSLGALASSVVAG) form a helical membrane-spanning segment. The short motif at 79-82 (ALAS) is the IAP-binding element. The serine protease stretch occupies residues 143-306 (SNGSGFVIEQ…IPIDYVKLFL (164 aa)). Catalysis depends on charge relay system residues histidine 161, aspartate 193, and serine 270. One can recognise a PDZ domain in the interval 329–414 (MGITMLTLTP…DLDMVILRGV (86 aa)).

Belongs to the peptidase S1C family. As to quaternary structure, interacts with th/DIAP1 (via BIR 2 domain).

The protein resides in the mitochondrion intermembrane space. The protein localises to the mitochondrion membrane. The enzyme catalyses Cleavage of non-polar aliphatic amino-acids at the P1 position, with a preference for Val, Ile and Met. At the P2 and P3 positions, Arg is selected most strongly with a secondary preference for other hydrophilic residues.. In terms of biological role, serine protease that shows proteolytic activity against a non-specific substrate beta-casein. Promotes or induces cell death either by direct binding to and inhibition of BIRC proteins (also called inhibitor of apoptosis proteins, IAPs), leading to an increase in caspase activity, or by a BIRC inhibition-independent, caspase-independent and serine protease activity-dependent mechanism. Can antagonize antiapoptotic activity of th/Diap1 by directly inducing the degradation of th/Diap1. This chain is Serine protease HTRA2, mitochondrial, found in Drosophila grimshawi (Hawaiian fruit fly).